The primary structure comprises 165 residues: Interferon gamma (165 aa).

Residues 1 to 23 (MKYTSYILAFQLCIVLGSLGCYC) form the signal peptide. Residue Gln-24 is modified to Pyrrolidone carboxylic acid. Asn-48 and Asn-120 each carry an N-linked (GlcNAc...) asparagine glycan.

This sequence belongs to the type II (or gamma) interferon family. In terms of assembly, homodimer. Interacts with IFNGR1 (via extracellular domain); this interaction promotes IFNGR1 dimerization. In terms of tissue distribution, released primarily from activated T lymphocytes.

Its subcellular location is the secreted. Functionally, type II interferon produced by immune cells such as T-cells and NK cells that plays crucial roles in antimicrobial, antiviral, and antitumor responses by activating effector immune cells and enhancing antigen presentation. Primarily signals through the JAK-STAT pathway after interaction with its receptor IFNGR1 to affect gene regulation. Upon IFNG binding, IFNGR1 intracellular domain opens out to allow association of downstream signaling components JAK2, JAK1 and STAT1, leading to STAT1 activation, nuclear translocation and transcription of IFNG-regulated genes. Many of the induced genes are transcription factors such as IRF1 that are able to further drive regulation of a next wave of transcription. Plays a role in class I antigen presentation pathway by inducing a replacement of catalytic proteasome subunits with immunoproteasome subunits. In turn, increases the quantity, quality, and repertoire of peptides for class I MHC loading. Increases the efficiency of peptide generation also by inducing the expression of activator PA28 that associates with the proteasome and alters its proteolytic cleavage preference. Up-regulates as well MHC II complexes on the cell surface by promoting expression of several key molecules such as cathepsins B/CTSB, H/CTSH, and L/CTSL. Participates in the regulation of hematopoietic stem cells during development and under homeostatic conditions by affecting their development, quiescence, and differentiation. This chain is Interferon gamma (IFNG), found in Cercocebus atys (Sooty mangabey).